A 223-amino-acid chain; its full sequence is Deoxyribose-phosphate aldolase (223 aa).

Residue D91 is the Proton donor/acceptor of the active site. Catalysis depends on K153, which acts as the Schiff-base intermediate with acetaldehyde. K182 (proton donor/acceptor) is an active-site residue.

It belongs to the DeoC/FbaB aldolase family. DeoC type 1 subfamily.

Its subcellular location is the cytoplasm. It catalyses the reaction 2-deoxy-D-ribose 5-phosphate = D-glyceraldehyde 3-phosphate + acetaldehyde. It functions in the pathway carbohydrate degradation; 2-deoxy-D-ribose 1-phosphate degradation; D-glyceraldehyde 3-phosphate and acetaldehyde from 2-deoxy-alpha-D-ribose 1-phosphate: step 2/2. Functionally, catalyzes a reversible aldol reaction between acetaldehyde and D-glyceraldehyde 3-phosphate to generate 2-deoxy-D-ribose 5-phosphate. This Streptococcus pyogenes serotype M3 (strain ATCC BAA-595 / MGAS315) protein is Deoxyribose-phosphate aldolase.